A 179-amino-acid polypeptide reads, in one-letter code: Putative cleavage and polyadenylation specificity factor subunit 4-like protein (179 aa).

C3H1-type zinc fingers lie at residues 35 to 61, 62 to 89, 90 to 117, 118 to 145, and 146 to 169; these read KSASAVCNFFTKGLCEKGKLCPFRHDR, GEKMVVCKHWLRGLCKKGDHCKFLHQYD, LTRMPECYFYSKFGDCSNKECSFLHVKP, AFKSQDCPWYDQGFCKDGPLCKYRHVPR, and IMCLNYLVGFCPEGPKCQFAQKIR.

This sequence belongs to the CPSF4/YTH1 family.

This Homo sapiens (Human) protein is Putative cleavage and polyadenylation specificity factor subunit 4-like protein (CPSF4L).